We begin with the raw amino-acid sequence, 209 residues long: Large ribosomal subunit protein bL9 (209 aa).

The tract at residues 181–209 is disordered; sequence EASEEGQELAAQREATEDAGADESEETEA. Residues 197 to 209 are compositionally biased toward acidic residues; it reads EDAGADESEETEA.

It belongs to the bacterial ribosomal protein bL9 family.

Its function is as follows. Binds to the 23S rRNA. The chain is Large ribosomal subunit protein bL9 from Maricaulis maris (strain MCS10) (Caulobacter maris).